Here is a 71-residue protein sequence, read N- to C-terminus: DNA-directed RNA polymerase subunit epsilon (71 aa).

This sequence belongs to the RNA polymerase subunit epsilon family. In terms of assembly, RNAP is composed of a core of 2 alpha, a beta and a beta' subunit. The core is associated with a delta subunit, and at least one of epsilon or omega. When a sigma factor is associated with the core the holoenzyme is formed, which can initiate transcription.

The catalysed reaction is RNA(n) + a ribonucleoside 5'-triphosphate = RNA(n+1) + diphosphate. Its function is as follows. A non-essential component of RNA polymerase (RNAP). In Anoxybacillus flavithermus (strain DSM 21510 / WK1), this protein is DNA-directed RNA polymerase subunit epsilon.